Here is a 71-residue protein sequence, read N- to C-terminus: MSLSNEEMISNIRQKLNIVNQALLNPEKFKSTPHQDISEIYEFVMSKDSFSPSEVTAIADHLGQLRQDMED.

This sequence belongs to the UPF0435 family.

The sequence is that of UPF0435 protein SE_1565 from Staphylococcus epidermidis (strain ATCC 12228 / FDA PCI 1200).